We begin with the raw amino-acid sequence, 453 residues long: Ribulose bisphosphate carboxylase large chain (453 aa).

The propeptide occupies 1 to 2 (MS). Pro-3 carries the N-acetylproline modification. Lys-14 carries the N6,N6,N6-trimethyllysine modification. The substrate site is built by Asn-123 and Thr-173. The Proton acceptor role is filled by Lys-175. Lys-177 provides a ligand contact to substrate. Residues Lys-201, Asp-203, and Glu-204 each contribute to the Mg(2+) site. Position 201 is an N6-carboxylysine (Lys-201). The active-site Proton acceptor is the His-294. Positions 295, 327, and 379 each coordinate substrate.

It belongs to the RuBisCO large chain family. Type I subfamily. In terms of assembly, heterohexadecamer of 8 large chains and 8 small chains; disulfide-linked. The disulfide link is formed within the large subunit homodimers. Mg(2+) serves as cofactor. Post-translationally, the disulfide bond which can form in the large chain dimeric partners within the hexadecamer appears to be associated with oxidative stress and protein turnover.

It is found in the plastid. It localises to the chloroplast. The enzyme catalyses 2 (2R)-3-phosphoglycerate + 2 H(+) = D-ribulose 1,5-bisphosphate + CO2 + H2O. The catalysed reaction is D-ribulose 1,5-bisphosphate + O2 = 2-phosphoglycolate + (2R)-3-phosphoglycerate + 2 H(+). RuBisCO catalyzes two reactions: the carboxylation of D-ribulose 1,5-bisphosphate, the primary event in carbon dioxide fixation, as well as the oxidative fragmentation of the pentose substrate in the photorespiration process. Both reactions occur simultaneously and in competition at the same active site. The polypeptide is Ribulose bisphosphate carboxylase large chain (Sherardia arvensis (Blue field-madder)).